The following is a 78-amino-acid chain: Probable two-component-system connector protein YcgZ (78 aa).

Functionally, probably a connector protein for RcsB/C regulation of biofilm formation, providing additional signal input into the two-component signaling pathway. Partially antagonizes the activities of YmgA and AriR, proteins that, via the Rcs phosphorelay, promote the synthesis of colanic acid, an exopolysaccharide and matrix component. This chain is Probable two-component-system connector protein YcgZ (ycgZ), found in Escherichia coli (strain K12).